The chain runs to 278 residues: Tryptophan synthase alpha chain (278 aa).

Active-site proton acceptor residues include Glu-50 and Asp-61.

The protein belongs to the TrpA family. As to quaternary structure, tetramer of two alpha and two beta chains.

It carries out the reaction (1S,2R)-1-C-(indol-3-yl)glycerol 3-phosphate + L-serine = D-glyceraldehyde 3-phosphate + L-tryptophan + H2O. The protein operates within amino-acid biosynthesis; L-tryptophan biosynthesis; L-tryptophan from chorismate: step 5/5. In terms of biological role, the alpha subunit is responsible for the aldol cleavage of indoleglycerol phosphate to indole and glyceraldehyde 3-phosphate. In Nitrobacter hamburgensis (strain DSM 10229 / NCIMB 13809 / X14), this protein is Tryptophan synthase alpha chain.